The sequence spans 211 residues: Large ribosomal subunit protein bL25 (211 aa).

Positions E185–K211 are disordered. Positions A199–K211 are enriched in low complexity.

The protein belongs to the bacterial ribosomal protein bL25 family. CTC subfamily. In terms of assembly, part of the 50S ribosomal subunit; part of the 5S rRNA/L5/L18/L25 subcomplex. Contacts the 5S rRNA. Binds to the 5S rRNA independently of L5 and L18.

Functionally, this is one of the proteins that binds to the 5S RNA in the ribosome where it forms part of the central protuberance. The polypeptide is Large ribosomal subunit protein bL25 (Treponema denticola (strain ATCC 35405 / DSM 14222 / CIP 103919 / JCM 8153 / KCTC 15104)).